We begin with the raw amino-acid sequence, 403 residues long: NADH-quinone oxidoreductase subunit D (403 aa).

This sequence belongs to the complex I 49 kDa subunit family. As to quaternary structure, NDH-1 is composed of 14 different subunits. Subunits NuoB, C, D, E, F, and G constitute the peripheral sector of the complex.

It localises to the cell inner membrane. The enzyme catalyses a quinone + NADH + 5 H(+)(in) = a quinol + NAD(+) + 4 H(+)(out). Functionally, NDH-1 shuttles electrons from NADH, via FMN and iron-sulfur (Fe-S) centers, to quinones in the respiratory chain. The immediate electron acceptor for the enzyme in this species is believed to be ubiquinone. Couples the redox reaction to proton translocation (for every two electrons transferred, four hydrogen ions are translocated across the cytoplasmic membrane), and thus conserves the redox energy in a proton gradient. The polypeptide is NADH-quinone oxidoreductase subunit D (Pelobacter propionicus (strain DSM 2379 / NBRC 103807 / OttBd1)).